The chain runs to 204 residues: Methylthioribulose-1-phosphate dehydratase (204 aa).

Zn(2+) is bound by residues His-94 and His-96.

This sequence belongs to the aldolase class II family. MtnB subfamily. It depends on Zn(2+) as a cofactor.

The catalysed reaction is 5-(methylsulfanyl)-D-ribulose 1-phosphate = 5-methylsulfanyl-2,3-dioxopentyl phosphate + H2O. The protein operates within amino-acid biosynthesis; L-methionine biosynthesis via salvage pathway; L-methionine from S-methyl-5-thio-alpha-D-ribose 1-phosphate: step 2/6. Catalyzes the dehydration of methylthioribulose-1-phosphate (MTRu-1-P) into 2,3-diketo-5-methylthiopentyl-1-phosphate (DK-MTP-1-P). The protein is Methylthioribulose-1-phosphate dehydratase of Cronobacter sakazakii (strain ATCC BAA-894) (Enterobacter sakazakii).